The chain runs to 122 residues: Large ribosomal subunit protein uL14 (122 aa).

Belongs to the universal ribosomal protein uL14 family. As to quaternary structure, part of the 50S ribosomal subunit. Forms a cluster with proteins L3 and L19. In the 70S ribosome, L14 and L19 interact and together make contacts with the 16S rRNA in bridges B5 and B8.

In terms of biological role, binds to 23S rRNA. Forms part of two intersubunit bridges in the 70S ribosome. This is Large ribosomal subunit protein uL14 from Streptomyces coelicolor (strain ATCC BAA-471 / A3(2) / M145).